Consider the following 129-residue polypeptide: MARKQVSRKRRVKKNIENGVAHIRSTFNNTIVTITDEFGNALSWSSAGALGFKGSKKSTPFAAQMASETASKTAMEHGLKTVEVTVKGPGPGRESAIRALQSAGLEVTAIRDVTPVPHNGCRPPKRRRV.

The protein belongs to the universal ribosomal protein uS11 family. In terms of assembly, part of the 30S ribosomal subunit. Interacts with proteins S7 and S18. Binds to IF-3.

Located on the platform of the 30S subunit, it bridges several disparate RNA helices of the 16S rRNA. Forms part of the Shine-Dalgarno cleft in the 70S ribosome. The chain is Small ribosomal subunit protein uS11 from Staphylococcus epidermidis (strain ATCC 12228 / FDA PCI 1200).